Reading from the N-terminus, the 677-residue chain is Multicopper oxidase GIP1 (677 aa).

Residues 1-23 form the signal peptide; that stretch reads MLTSPRLILLLLAWVFSALVASA. Plastocyanin-like domains follow at residues 31 to 150 and 179 to 379; these read ITWE…IRRK and LVMV…RYKG. N76 carries N-linked (GlcNAc...) asparagine glycosylation. Cu cation is bound by residues H80, H82, H130, and H132. N228, N283, N396, and N478 each carry an N-linked (GlcNAc...) asparagine glycan. A Plastocyanin-like 3 domain is found at 469–588; sequence DEGLVIRTKN…AGGMAIAILD (120 aa). H503 is a binding site for Cu cation. N-linked (GlcNAc...) asparagine glycosylation is present at N520. Residues 629–651 form a disordered region; sequence PLLAVSPSGGPKKDSGETSASDS.

It belongs to the multicopper oxidase family. Might be part of an extracellular enzyme complex composed of GIP1, aurF, aurO and aurS.

It is found in the secreted. Its subcellular location is the extracellular space. It participates in pigment biosynthesis. Multicopper oxidase; part of the gene cluster that mediates the biosynthesis of aurofusarin, a red mycelium pigment which is acting as a mycotoxin. The first step is performed by the polyketide synthase which condenses one acetyl-CoA and 6 malonyl-CoA units to form the first intermediate, the cyclic heptaketide and yellow pigment YWA1. The C2 hydroxyl group in the pyrone ring of YWA1 is probably formed during ring closure by an aldol-type cyclization reaction. The dehydratase aurZ then acts as the first tailoring enzyme in the aurofusarin biosynthetic pathway by converting YWA1 to nor-rubrofusarin. Nor-rubrofusarin is then methylated to rubrofusarin by the O-methyltransferase aurJ. Rubrofusarin is then transported across the plasma membrane by the rubrofusarin-specific pump aurT for further enzymatic processing by the extracellular complex composed of GIP1, aurF, aurO and aurS to yield aurofusarin. In Gibberella zeae (strain ATCC MYA-4620 / CBS 123657 / FGSC 9075 / NRRL 31084 / PH-1) (Wheat head blight fungus), this protein is Multicopper oxidase GIP1.